The primary structure comprises 284 residues: Pantothenate synthetase (284 aa).

30–37 (MGNLHEGH) provides a ligand contact to ATP. The active-site Proton donor is His37. Gln61 is a (R)-pantoate binding site. Gln61 contributes to the beta-alanine binding site. An ATP-binding site is contributed by 149–152 (GEKD). Residue Gln155 participates in (R)-pantoate binding. ATP is bound by residues Val178 and 186–189 (LSSR).

Belongs to the pantothenate synthetase family. As to quaternary structure, homodimer.

It localises to the cytoplasm. It catalyses the reaction (R)-pantoate + beta-alanine + ATP = (R)-pantothenate + AMP + diphosphate + H(+). The protein operates within cofactor biosynthesis; (R)-pantothenate biosynthesis; (R)-pantothenate from (R)-pantoate and beta-alanine: step 1/1. Its function is as follows. Catalyzes the condensation of pantoate with beta-alanine in an ATP-dependent reaction via a pantoyl-adenylate intermediate. The chain is Pantothenate synthetase from Yersinia enterocolitica serotype O:8 / biotype 1B (strain NCTC 13174 / 8081).